The chain runs to 303 residues: NmrA-like family domain-containing oxidoreductase FVEG_08287 (303 aa).

NADP(+) contacts are provided by residues 8-13, 8-14, 36-39, Arg-37, 56-57, 77-79, and 159-162; these read LGAGEL, LGAGELG, LRPS, QG, IFR, and FMSF.

Belongs to the NmrA-type oxidoreductase family.

Functionally, nmrA-like family domain-containing oxidoreductase; part of the Fusarium detoxification of benzoxazolinone cluster 1 (FDB1) involved in the degradation of benzoxazolinones produced by the host plant. Maize, wheat, and rye produce the 2 benzoxazinone phytoanticipins 2,4-dihy-droxy-7-methoxy-1,4-benzoxazin-3-one (DIMBOA) and 2,4-dihydroxy-1,4-benzoxazin-3-one (DIBOA) that, due to their inherent instability once released, spontaneously degrade to the more stable corresponding benzoxazolinones, 6-methoxy-2-benzoxazolinone (MBOA) and 2-benzoxazolinone (BOA), respectively. The first step in the detoxification of benzoxazolinones involves the hydrolysis of the cyclic ester bond of benzoxazolinones by the FDB1 cluster gamma-lactamase MBL1 to aminophenols. MBL1 is able to convert BOA into 2-aminophenol (2-AP), as well as MBOA into 5-methoxy-2-aminophenol (2-AMP). The FDB2 cluster N-malonyltransferase FDB2/NAT1 then metabolizes aminophenols via N-malonylation to non-toxic malonamic acids. FDB2/NAT1 converts 2-AP into N-(2-hydroxyphenyl) malonamic acid (HPMA) and 2-AMP into N-(2-hydroxy-4-methoxyphenyl) malonamic acid (HMPMA). The duplicated dienlactone hydrolases DLH1 and DLH2 may provide redundant function for hydrolyzing the lactone moiety in the BOA molecule. The roles of the amidases an other enzymes encoded by the 2 FDB clusters have not been identified so far. The sequence is that of NmrA-like family domain-containing oxidoreductase FVEG_08287 from Gibberella moniliformis (strain M3125 / FGSC 7600) (Maize ear and stalk rot fungus).